The primary structure comprises 366 residues: Putative type II methyltransferase M.MjaORF1200P (366 aa).

One can recognise an SAM-dependent MTase C5-type domain in the interval 5 to 366 (LKFIDLFCGC…IARVIKENLK (362 aa)). Cysteine 133 is a catalytic residue.

The protein belongs to the class I-like SAM-binding methyltransferase superfamily. C5-methyltransferase family.

The catalysed reaction is a 2'-deoxycytidine in DNA + S-adenosyl-L-methionine = a 5-methyl-2'-deoxycytidine in DNA + S-adenosyl-L-homocysteine + H(+). A putative methylase that probably protects DNA from cleavage by the MjaORF1200P endonuclease. This chain is Putative type II methyltransferase M.MjaORF1200P, found in Methanocaldococcus jannaschii (strain ATCC 43067 / DSM 2661 / JAL-1 / JCM 10045 / NBRC 100440) (Methanococcus jannaschii).